Consider the following 472-residue polypeptide: Ammonium transporter Rh type C (472 aa).

Residues 1-9 (MAWNTNLRW) are Cytoplasmic-facing. A helical transmembrane segment spans residues 10 to 30 (RLPLTCLLLEVVMVILFGVFV). The Extracellular portion of the chain corresponds to 31–51 (RYDFDADAHWWSWRTEFYYRY). A helical transmembrane segment spans residues 52-72 (PSFQDVHVMVFVGFGFLMTFL). Topologically, residues 73-76 (QRYG) are cytoplasmic. The chain crosses the membrane as a helical span at residues 77-97 (FSAVGFNFLLAAFGIQWALLM). At 98-114 (QGWFHFLQGRYIVVGVE) the chain is on the extracellular side. A helical transmembrane segment spans residues 115 to 135 (NLINADFCVASVCVAFGAVLG). The Cytoplasmic segment spans residues 136–139 (KVSP). A helical transmembrane segment spans residues 140 to 160 (IQLLIMTFFQVTLFAVNEFIL). Over 161–168 (LNLLKVKD) the chain is Extracellular. Residues 169 to 191 (AGGSMTIHTFGAYFGLTVTRILY) form a helical membrane-spanning segment. The Cytoplasmic segment spans residues 192–209 (RRNLEQSKERQNSVYQSD). Residues 210-230 (LFAMIGTLFLWMYWPSFNSAI) form a helical membrane-spanning segment. At 231 to 241 (SYHGDSQHRAA) the chain is on the extracellular side. A helical membrane pass occupies residues 242–262 (INTYCSLAACVLTSVAISSAL). Over 263 to 294 (HKKGKLDMVHIQNATPAGGVAVGTAAEMMLMP) the chain is Cytoplasmic. The helical transmembrane segment at 295 to 315 (YGALIVGFVCGIISTLGFVYL) threads the bilayer. Over 316 to 336 (TPFLESRLHIQDTCGINNLHG) the chain is Extracellular. Residues 337–357 (IPGIIGGIVGAVTAASASLEV) form a helical membrane-spanning segment. The Cytoplasmic segment spans residues 358 to 388 (YGKEGLVHSFDFQGFKRDWTARTQGKFQIYG). The helical transmembrane segment at 389-409 (LLVTLAMALMGGIIVGVGLIL) threads the bilayer. At 410-450 (RLPFWGQPSDENCFEDAVYWEMPEGNSTVYIPEDPTFKPSG) the chain is on the extracellular side. N435 carries N-linked (GlcNAc...) asparagine glycosylation. A helical transmembrane segment spans residues 451–471 (PSVPSVPMVSPLPMASSVPLV). A topological domain (cytoplasmic) is located at residue P472.

This sequence belongs to the ammonium transporter (TC 2.A.49) family. Rh subfamily. As to quaternary structure, homotrimer. Post-translationally, N-glycosylated.

It localises to the cell membrane. Its subcellular location is the apical cell membrane. It catalyses the reaction NH4(+)(in) = NH4(+)(out). The enzyme catalyses methylamine(out) = methylamine(in). The catalysed reaction is CO2(out) = CO2(in). Functionally, ammonium transporter involved in the maintenance of acid-base homeostasis. Transports ammonium and its related derivative methylammonium across the plasma membrane of epithelial cells likely contributing to renal transepithelial ammonia transport and ammonia metabolism. Postulated to primarily mediate an electroneutral bidirectional transport of NH3 ammonia species according to a mechanism that implies interaction of an NH4(+) ion with acidic residues of the pore entry followed by dissociation of NH4(+) into NH3 and H(+). As a result NH3 transits through the central pore and is protonated on the extracellular side reforming NH4(+). May act as a CO2 channel providing for renal acid secretion. This is Ammonium transporter Rh type C (RHCG) from Pongo abelii (Sumatran orangutan).